A 315-amino-acid chain; its full sequence is Putative S-adenosyl-L-methionine-dependent methyltransferase MAV_4557 (315 aa).

S-adenosyl-L-methionine contacts are provided by residues Asp-134 and 163–164; that span reads DL.

Belongs to the UPF0677 family.

Exhibits S-adenosyl-L-methionine-dependent methyltransferase activity. The polypeptide is Putative S-adenosyl-L-methionine-dependent methyltransferase MAV_4557 (Mycobacterium avium (strain 104)).